Reading from the N-terminus, the 31-residue chain is Cytochrome b6-f complex subunit 6 (31 aa).

A helical membrane pass occupies residues 4 to 24 (LTSYFGFLLAALTITSVLFIG).

It belongs to the PetL family. In terms of assembly, the 4 large subunits of the cytochrome b6-f complex are cytochrome b6, subunit IV (17 kDa polypeptide, PetD), cytochrome f and the Rieske protein, while the 4 small subunits are PetG, PetL, PetM and PetN. The complex functions as a dimer.

It is found in the plastid. It localises to the chloroplast thylakoid membrane. Functionally, component of the cytochrome b6-f complex, which mediates electron transfer between photosystem II (PSII) and photosystem I (PSI), cyclic electron flow around PSI, and state transitions. PetL is important for photoautotrophic growth as well as for electron transfer efficiency and stability of the cytochrome b6-f complex. This is Cytochrome b6-f complex subunit 6 from Silene conica (Striped corn catchfly).